Here is a 154-residue protein sequence, read N- to C-terminus: Myoglobin (154 aa).

Positions 2-148 (GLSDGEWQLV…FRNDIAAKYK (147 aa)) constitute a Globin domain. S4 is subject to Phosphoserine. Residue H65 coordinates nitrite. H65 lines the O2 pocket. T68 bears the Phosphothreonine mark. Residue H94 coordinates heme b.

It belongs to the globin family. Monomeric.

The protein localises to the cytoplasm. It is found in the sarcoplasm. It carries out the reaction Fe(III)-heme b-[protein] + nitric oxide + H2O = Fe(II)-heme b-[protein] + nitrite + 2 H(+). The catalysed reaction is H2O2 + AH2 = A + 2 H2O. Its function is as follows. Monomeric heme protein which primary function is to store oxygen and facilitate its diffusion within muscle tissues. Reversibly binds oxygen through a pentacoordinated heme iron and enables its timely and efficient release as needed during periods of heightened demand. Depending on the oxidative conditions of tissues and cells, and in addition to its ability to bind oxygen, it also has a nitrite reductase activity whereby it regulates the production of bioactive nitric oxide. Under stress conditions, like hypoxia and anoxia, it also protects cells against reactive oxygen species thanks to its pseudoperoxidase activity. The polypeptide is Myoglobin (MB) (Lagostomus maximus (Plains viscacha)).